Reading from the N-terminus, the 249-residue chain is 5'-nucleotidase SurE (249 aa).

A divalent metal cation is bound by residues aspartate 8, aspartate 9, serine 39, and asparagine 91.

This sequence belongs to the SurE nucleotidase family. Requires a divalent metal cation as cofactor.

The protein localises to the cytoplasm. It catalyses the reaction a ribonucleoside 5'-phosphate + H2O = a ribonucleoside + phosphate. Nucleotidase that shows phosphatase activity on nucleoside 5'-monophosphates. This is 5'-nucleotidase SurE from Pseudomonas syringae pv. tomato (strain ATCC BAA-871 / DC3000).